The sequence spans 240 residues: Pro-opiomelanocortin B (240 aa).

The first 36 residues, 1 to 36, serve as a signal peptide directing secretion; that stretch reads MFGTFLQNQSVRLNMVCAPWLLAVVVVCVCNPGVEG. Gln37 is modified (pyrrolidone carboxylic acid). His111 is a propeptide. Ser112 carries the post-translational modification N-acetylserine; in Corticotropin. The residue at position 124 (Ile124) is an Isoleucine amide.

Belongs to the POMC family. In terms of processing, specific enzymatic cleavages at paired basic residues yield the different active peptides. Acetylation of beta-endorphin occurs in a tissue-specific manner. Pituitary and hypothalamus of adult diploid animals.

The protein resides in the secreted. Stimulates the adrenal glands to release cortisol. Functionally, melanocyte-stimulating hormone alpha: Anorexigenic peptide. Increases the pigmentation of skin by increasing melanin production in melanocytes. Its function is as follows. Melanocyte-stimulating hormone beta: Increases the pigmentation of skin by increasing melanin production in melanocytes. In terms of biological role, beta-endorphin: Endogenous orexigenic opiate. Endogenous opiate. In Oncorhynchus mykiss (Rainbow trout), this protein is Pro-opiomelanocortin B (pomcb).